Here is a 617-residue protein sequence, read N- to C-terminus: Bifunctional TH2 protein, mitochondrial (617 aa).

A mitochondrion-targeting transit peptide spans 1-28 (MRFLFPTRLINNSSLGLLRSPHTTAPIR). Residue Asp107 participates in substrate binding. The Nucleophile role is filled by Cys213. Residues Tyr217 and Tyr244 each contribute to the substrate site. Glu286 functions as the Proton donor in the catalytic mechanism.

It in the N-terminal section; belongs to the TenA family. The protein in the C-terminal section; belongs to the HAD-like hydrolase superfamily.

The protein resides in the mitochondrion. It is found in the cytoplasm. It catalyses the reaction thiamine phosphate + H2O = thiamine + phosphate. The enzyme catalyses 4-amino-5-aminomethyl-2-methylpyrimidine + H2O = 4-amino-5-hydroxymethyl-2-methylpyrimidine + NH4(+). Its function is as follows. May be involved in the salvage of thiamine breakdown products. This protein has a haloacid dehalogenase family domain fused to its TenA domain. Phosphatase with the highest activity against thiamine monophosphate (ThMP) and, with a lower activity, against thiamine diphosphate (ThDP), flavin mononucleotide, inorganic pyrophosphate, CTP and dATP. Has a thiamine salvage hydrolase activity, but only against 4-amino-5-aminomethyl-2-methylpyrimidine (amino-HMP) and not against N-formylamino-HMP, desthiothiamine, thiamine, ThMP, and ThDP. The polypeptide is Bifunctional TH2 protein, mitochondrial (Arabidopsis thaliana (Mouse-ear cress)).